The following is a 564-amino-acid chain: MEEPMAFSSLRGSDRCPADDSLKKYEQSVKLSGIKRDIEELCEAVPQLVNVFKIKDKIGEGTFSSVYLATAQLQEGHEEKIALKHLIPTSHPMRIAAELQCLTVAGGQDNVMGLKYCFRKNDHVVIAMPYLEHESFLDILNSLSFQEVREYMYNLFVALKRIHQFGIVHRDVKPSNFLYNRRLKKYALVDFGLAQGTRDTKIELLKFVQSEAQQEDCSRNKYHGVVGHKGLLSRPAPKTVDQQCTPKTSVKRSYTQVHIKQGKDGKERSVGLSVQRSVFGERNFNIHSSISHESPAEKLIKQSKTVDIISRKLATKKTAISTKAMNSVMRETARSCPAVLTCDCYGSDRVCSVCLSRRQQVAPRAGTPGFRAPEVLTKCPDQTTAIDMWSAGVIFLSLLSGRYPFYKASDDLTALAQIMTIRGSRETIQAAKAFGKSVLCSKEVPAQDLRALCERLRGLDSTTPRSASGPPGNASYDPAASKNTDHKASRVQAAQAQHSEDSLYKRDNDGYWSHPKDCTSNSEGWDSVPDEAYDLLDKLLDLNPASRITAEAALLHAFFKDMCS.

Serine 21 carries the phosphoserine modification. Positions 52-564 (FKIKDKIGEG…LHAFFKDMCS (513 aa)) constitute a Protein kinase domain. Residues 58-66 (IGEGTFSSV) and lysine 84 each bind ATP. Aspartate 171 functions as the Proton acceptor in the catalytic mechanism. Lysine 260 is covalently cross-linked (Glycyl lysine isopeptide (Lys-Gly) (interchain with G-Cter in SUMO2)). Residues 460-506 (DSTTPRSASGPPGNASYDPAASKNTDHKASRVQAAQAQHSEDSLYKR) form a disordered region.

It belongs to the protein kinase superfamily. Ser/Thr protein kinase family. CDC7 subfamily. In terms of assembly, forms a complex with either DBF4/DBF4A or DBF4B, leading to the activation of the kinase activity. Interacts with CLASPIN (via the acidic patch); the interaction is required for phosphorylation of MCM proteins and CLASPIN. Requires Mg(2+) as cofactor.

Its subcellular location is the nucleus. It catalyses the reaction L-seryl-[protein] + ATP = O-phospho-L-seryl-[protein] + ADP + H(+). The catalysed reaction is L-threonyl-[protein] + ATP = O-phospho-L-threonyl-[protein] + ADP + H(+). Kinase involved in initiation of DNA replication. Phosphorylates critical substrates that regulate the G1/S phase transition and initiation of DNA replication, such as MCM proteins and CLASPIN. This chain is Cell division cycle 7-related protein kinase (Cdc7), found in Mus musculus (Mouse).